The following is a 471-amino-acid chain: NADH-quinone oxidoreductase subunit N (471 aa).

Transmembrane regions (helical) follow at residues 6-26 (FILPEIFISLSIMFLLLLGVY), 30-50 (SSNIVHNLAVGSLLITGILIF), 70-90 (LSSFMKILTILGGAFVLSIST), 98-118 (IFLIEYPVLILSSILGMMVMI), 123-143 (LMVFYIGLELQSLALYVLASF), 158-178 (FVLSALSSGLLLYGCSLVYGF), 198-218 (LTFGIVFILVGLAFKISAVPF), 230-250 (PTAVTLFFAIVPKVAALTVFI), 264-284 (WQPILIFLSIASMIFGAIAAI), 292-312 (LIAYSSIGHMGYALAGLSTGS), 320-340 (IVYMSIYLVMNLAFFSCLLML), 365-385 (LSLLAILFSLAGIPPLAGFFA), 400-420 (FLAIVGLLSTVIAAFYYLKII), and 438-458 (IWLKGSLTFSTLLILLYFIFP).

Belongs to the complex I subunit 2 family. NDH-1 is composed of 14 different subunits. Subunits NuoA, H, J, K, L, M, N constitute the membrane sector of the complex.

The protein resides in the cell inner membrane. The catalysed reaction is a quinone + NADH + 5 H(+)(in) = a quinol + NAD(+) + 4 H(+)(out). In terms of biological role, NDH-1 shuttles electrons from NADH, via FMN and iron-sulfur (Fe-S) centers, to quinones in the respiratory chain. The immediate electron acceptor for the enzyme in this species is believed to be ubiquinone. Couples the redox reaction to proton translocation (for every two electrons transferred, four hydrogen ions are translocated across the cytoplasmic membrane), and thus conserves the redox energy in a proton gradient. The chain is NADH-quinone oxidoreductase subunit N from Pelagibacter ubique (strain HTCC1062).